A 347-amino-acid chain; its full sequence is UPF0284 protein M1627_0030 (347 aa).

This sequence belongs to the UPF0284 family.

This is UPF0284 protein M1627_0030 from Saccharolobus islandicus (strain M.16.27) (Sulfolobus islandicus).